The chain runs to 423 residues: Protein SOSEKI 5 (423 aa).

A disordered region spans residues 1–33; it reads MSSRVFRATPDNNYLVPRRSKDQQDTSPDRNRI. Basic and acidic residues predominate over residues 19-33; sequence RSKDQQDTSPDRNRI. The DIX-like oligomerization domain stretch occupies residues 45-136; the sequence is RKVPVVYYLC…YVLKGSEVLD (92 aa). Disordered regions lie at residues 150 to 172 and 196 to 258; these read SSFR…PAVI and SSAE…SPET. Positions 196-211 are enriched in polar residues; the sequence is SSAESTQRLAADASTQ. Short sequence motifs (association to cell membranes) lie at residues 233–234 and 303–304; these read AS and CG. Residues 379-423 are disordered; sequence SSSYNADRCSRMGPTTEKDEEEAVRAKCIPRKPKPVAKRNNGGQQ. Basic residues predominate over residues 406–415; the sequence is CIPRKPKPVA.

Belongs to the SOSEKI family. In terms of assembly, homodimer. Forms long polymer filaments with other SOKs proteins polymers (e.g. SOK1, SOK2, SOK3 and SOK4) crucial for polar localization and biological activity. Binds to ANGUSTIFOLIA (AN). Expressed during embryogenesis and in roots.

Its subcellular location is the cell membrane. Functionally, SOSEKI proteins (SOK1-5) locally interpret global polarity cues and can influence cell division orientation to coordinate cell polarization relative to body axes. In Arabidopsis thaliana (Mouse-ear cress), this protein is Protein SOSEKI 5.